Here is a 327-residue protein sequence, read N- to C-terminus: Endo-1,4-beta-xylanase C (327 aa).

An N-terminal signal peptide occupies residues 1–15 (MKFSSLLFTASLVAA). One can recognise a GH10 domain in the interval 43–325 (TITDPNLLQS…KPAYTAVVNA (283 aa)). Glu154 serves as the catalytic Proton donor. Glu262 (nucleophile) is an active-site residue. The cysteines at positions 280 and 286 are disulfide-linked.

It belongs to the glycosyl hydrolase 10 (cellulase F) family.

It is found in the secreted. The catalysed reaction is Endohydrolysis of (1-&gt;4)-beta-D-xylosidic linkages in xylans.. The protein operates within glycan degradation; xylan degradation. With respect to regulation, weakly inhibited by the wheat xylanase inhibiting protein I (XIP-I). Functionally, endo-1,4-beta-xylanase involved in the hydrolysis of xylan, a major structural heterogeneous polysaccharide found in plant biomass representing the second most abundant polysaccharide in the biosphere, after cellulose. Plays an important role in causing fusarium head blight (FHB) on cereal crops. The protein is Endo-1,4-beta-xylanase C (XYLC) of Gibberella zeae (strain ATCC MYA-4620 / CBS 123657 / FGSC 9075 / NRRL 31084 / PH-1) (Wheat head blight fungus).